We begin with the raw amino-acid sequence, 491 residues long: Glutamyl-tRNA(Gln) amidotransferase subunit A (491 aa).

Residues lysine 77 and serine 152 each act as charge relay system in the active site. Serine 176 functions as the Acyl-ester intermediate in the catalytic mechanism.

It belongs to the amidase family. GatA subfamily. Heterotrimer of A, B and C subunits.

It catalyses the reaction L-glutamyl-tRNA(Gln) + L-glutamine + ATP + H2O = L-glutaminyl-tRNA(Gln) + L-glutamate + ADP + phosphate + H(+). Functionally, allows the formation of correctly charged Gln-tRNA(Gln) through the transamidation of misacylated Glu-tRNA(Gln) in organisms which lack glutaminyl-tRNA synthetase. The reaction takes place in the presence of glutamine and ATP through an activated gamma-phospho-Glu-tRNA(Gln). This Chlamydia abortus (strain DSM 27085 / S26/3) (Chlamydophila abortus) protein is Glutamyl-tRNA(Gln) amidotransferase subunit A.